The following is a 302-amino-acid chain: Sulfate adenylyltransferase subunit 2 (302 aa).

The protein belongs to the PAPS reductase family. CysD subfamily. In terms of assembly, heterodimer composed of CysD, the smaller subunit, and CysN.

It carries out the reaction sulfate + ATP + H(+) = adenosine 5'-phosphosulfate + diphosphate. The protein operates within sulfur metabolism; hydrogen sulfide biosynthesis; sulfite from sulfate: step 1/3. In terms of biological role, with CysN forms the ATP sulfurylase (ATPS) that catalyzes the adenylation of sulfate producing adenosine 5'-phosphosulfate (APS) and diphosphate, the first enzymatic step in sulfur assimilation pathway. APS synthesis involves the formation of a high-energy phosphoric-sulfuric acid anhydride bond driven by GTP hydrolysis by CysN coupled to ATP hydrolysis by CysD. This chain is Sulfate adenylyltransferase subunit 2, found in Baumannia cicadellinicola subsp. Homalodisca coagulata.